Here is a 292-residue protein sequence, read N- to C-terminus: GTP cyclohydrolase FolE2 (292 aa).

It belongs to the GTP cyclohydrolase IV family.

It catalyses the reaction GTP + H2O = 7,8-dihydroneopterin 3'-triphosphate + formate + H(+). Its pathway is cofactor biosynthesis; 7,8-dihydroneopterin triphosphate biosynthesis; 7,8-dihydroneopterin triphosphate from GTP: step 1/1. Converts GTP to 7,8-dihydroneopterin triphosphate. The chain is GTP cyclohydrolase FolE2 from Staphylococcus epidermidis (strain ATCC 12228 / FDA PCI 1200).